Consider the following 239-residue polypeptide: Skn-1 dependent zygotic transcript 1 protein (239 aa).

In terms of biological role, may have a role in mesendoderm development during embryogenesis. This Caenorhabditis briggsae protein is Skn-1 dependent zygotic transcript 1 protein.